The chain runs to 599 residues: Glutamine--fructose-6-phosphate aminotransferase [isomerizing] (599 aa).

The Nucleophile; for GATase activity role is filled by Cys2. The Glutamine amidotransferase type-2 domain occupies 2–223; it reads CGIIGYIGNE…DRDIVILRKE (222 aa). 2 consecutive SIS domains span residues 286-423 and 452-589; these read LGKE…IIGK and IAEE…VDKP. Lys594 (for Fru-6P isomerization activity) is an active-site residue.

In terms of assembly, homodimer.

It is found in the cytoplasm. It catalyses the reaction D-fructose 6-phosphate + L-glutamine = D-glucosamine 6-phosphate + L-glutamate. Its function is as follows. Catalyzes the first step in hexosamine metabolism, converting fructose-6P into glucosamine-6P using glutamine as a nitrogen source. This Methanococcus maripaludis (strain DSM 14266 / JCM 13030 / NBRC 101832 / S2 / LL) protein is Glutamine--fructose-6-phosphate aminotransferase [isomerizing] (glmS).